Reading from the N-terminus, the 121-residue chain is Group 1 truncated hemoglobin (121 aa).

M1 is modified (N-acetylmethionine). A heme-binding site is contributed by H73.

It belongs to the truncated hemoglobin family. Group I subfamily. In terms of assembly, monomer. Heme serves as cofactor.

The protein is Group 1 truncated hemoglobin of Tetrahymena thermophila.